Consider the following 335-residue polypeptide: Biotin synthase (335 aa).

The region spanning 46-274 (YNIQLASLFS…KSKIRLSAGR (229 aa)) is the Radical SAM core domain. 3 residues coordinate [4Fe-4S] cluster: Cys-61, Cys-65, and Cys-68. Residues Cys-105, Cys-137, Cys-197, and Arg-269 each coordinate [2Fe-2S] cluster.

This sequence belongs to the radical SAM superfamily. Biotin synthase family. In terms of assembly, homodimer. [4Fe-4S] cluster is required as a cofactor. The cofactor is [2Fe-2S] cluster.

It carries out the reaction (4R,5S)-dethiobiotin + (sulfur carrier)-SH + 2 reduced [2Fe-2S]-[ferredoxin] + 2 S-adenosyl-L-methionine = (sulfur carrier)-H + biotin + 2 5'-deoxyadenosine + 2 L-methionine + 2 oxidized [2Fe-2S]-[ferredoxin]. It participates in cofactor biosynthesis; biotin biosynthesis; biotin from 7,8-diaminononanoate: step 2/2. Catalyzes the conversion of dethiobiotin (DTB) to biotin by the insertion of a sulfur atom into dethiobiotin via a radical-based mechanism. This is Biotin synthase from Prochlorococcus marinus (strain AS9601).